The sequence spans 249 residues: Kallikrein-7 (249 aa).

An N-terminal signal peptide occupies residues 1–21; sequence MGVWLLSLITVLLSLALETAG. The propeptide at 22 to 25 is activation peptide; sequence QGER. The interval 26 to 246 is serine protease; that stretch reads IIDGYKCKEG…YKRWVMETMK (221 aa). 6 disulfide bridges follow: cysteine 32–cysteine 161, cysteine 51–cysteine 67, cysteine 133–cysteine 235, cysteine 140–cysteine 207, cysteine 172–cysteine 186, and cysteine 197–cysteine 222. Residues histidine 66 and aspartate 108 each act as charge relay system in the active site. The active-site Charge relay system is the serine 201.

This sequence belongs to the peptidase S1 family. Kallikrein subfamily. Expressed in skin and, at lower levels, in lung, kidney, brain, heart and spleen. In skin, expressed in high suprabasal keratinocytes and in the luminal parts of hair follicles. Not detected in liver and skeletal muscle.

The protein resides in the secreted. The enzyme catalyses Cleavage of proteins with aromatic side chains in the P1 position.. With respect to regulation, inhibited by Zn2+ and Cu2+ at low micromolar concentrations. Inhibited by SERPINA12. Its function is as follows. May catalyze the degradation of intercellular cohesive structures in the cornified layer of the skin in the continuous shedding of cells from the skin surface. Specific for amino acid residues with aromatic side chains in the P1 position. Cleaves insulin A chain at '14-Tyr-|-Gln-15' and insulin B chain at '6-Leu-|-Cys-7', '16-Tyr-|-Leu-17', '25-Phe-|-Tyr-26' and '26-Tyr-|-Thr-27'. Could play a role in the activation of precursors to inflammatory cytokines. In Mus musculus (Mouse), this protein is Kallikrein-7 (Klk7).